The following is a 242-amino-acid chain: Lactate utilization protein A 2 (242 aa).

Belongs to the LutA/YkgE family.

Functionally, is involved in L-lactate degradation and allows cells to grow with lactate as the sole carbon source. This is Lactate utilization protein A 2 from Bacillus cereus (strain ZK / E33L).